Consider the following 472-residue polypeptide: Protein PIN-LIKES 1 (472 aa).

At 1–93 (MSLTQSAKLH…FYSMRMRLLD (93 aa)) the chain is on the lumenal side. Residues 94-114 (LFITSSIPVAKILLITGIGFY) form a helical membrane-spanning segment. Residues 115–133 (LALDQVNILNHDARKQLNN) are Cytoplasmic-facing. Residues 134-154 (IVFYVFSPSLVASSLSETITY) form a helical membrane-spanning segment. The Lumenal portion of the chain corresponds to 155–161 (ESMVKMW). A helical transmembrane segment spans residues 162-182 (FMPLNVLLTFIIGSFLGWIVI). The Cytoplasmic portion of the chain corresponds to 183 to 193 (KITKPPSHLRG). Residues 194-214 (IIVGCCAAGNLGNMPLIIIPA) form a helical membrane-spanning segment. Topologically, residues 215 to 231 (ICNEKGSPFGDPESCEK) are lumenal. Residues 232–252 (FGLGYIALSMAIGAIYIWTYV) traverse the membrane as a helical segment. At 253-309 (YNLMRMLANPAGETAINSTSSTMPLISPKVEVAEQVGTWGKVKQRVCSVAEKINLRT) the chain is on the cytoplasmic side. Residues 310–330 (IFAPSTIAALIALAVGLNPLL) traverse the membrane as a helical segment. Residues 331 to 347 (RKLLVGNTAPLRVIEDS) lie on the Lumenal side of the membrane. The helical transmembrane segment at 348-368 (VSLLGDGAIPVLTLIVGGNLL) threads the bilayer. Over 369–379 (NGLRGSGINKS) the chain is Cytoplasmic. A helical transmembrane segment spans residues 380–400 (VIMGVVVVRYLLLPILGVFIV). The Lumenal segment spans residues 401–413 (RGAHYLGLVTSEP). The helical transmembrane segment at 414-434 (LYQFVLLLQYVVPPAMNLGTI) threads the bilayer. At 435–446 (TQLFGSGESECS) the chain is on the cytoplasmic side. Residues 447 to 467 (VILFWSYALASVSLTVWPTFF) form a helical membrane-spanning segment. At 468 to 472 (MWLVA) the chain is on the lumenal side.

This sequence belongs to the auxin efflux carrier (TC 2.A.69.2) family. Expressed in flowers.

The protein localises to the endoplasmic reticulum membrane. Its function is as follows. Involved in cellular auxin homeostasis by regulating auxin metabolism. Regulates intracellular auxin accumulation at the endoplasmic reticulum and thus auxin availability for nuclear auxin signaling. This Arabidopsis thaliana (Mouse-ear cress) protein is Protein PIN-LIKES 1.